A 138-amino-acid polypeptide reads, in one-letter code: Small ribosomal subunit protein uS11c (138 aa).

Positions 1–24 (MAKAIPRSGSRRSGRIGSRKSTRR) are disordered. Positions 9-24 (GSRRSGRIGSRKSTRR) are enriched in basic residues.

It belongs to the universal ribosomal protein uS11 family. As to quaternary structure, part of the 30S ribosomal subunit.

The protein localises to the plastid. Its subcellular location is the chloroplast. The chain is Small ribosomal subunit protein uS11c from Panax ginseng (Korean ginseng).